The sequence spans 220 residues: N-(5'-phosphoribosyl)anthranilate isomerase (220 aa).

Belongs to the TrpF family.

The enzyme catalyses N-(5-phospho-beta-D-ribosyl)anthranilate = 1-(2-carboxyphenylamino)-1-deoxy-D-ribulose 5-phosphate. The protein operates within amino-acid biosynthesis; L-tryptophan biosynthesis; L-tryptophan from chorismate: step 3/5. The sequence is that of N-(5'-phosphoribosyl)anthranilate isomerase from Xylella fastidiosa (strain 9a5c).